Consider the following 416-residue polypeptide: Serine/threonine-protein kinase 26 (416 aa).

A2 carries the N-acetylalanine modification. Phosphoserine is present on S4. Residues 24–274 (FTKLERIGKG…AKELLKHKFI (251 aa)) enclose the Protein kinase domain. ATP is bound by residues 30 to 38 (IGKGSFGEV) and K53. Catalysis depends on D144, which acts as the Proton acceptor. T178 carries the phosphothreonine; by autocatalysis modification. Residues 297 to 340 (EGHSDDESDSEGSDSESTSRENNTHPEWSFTTVRKKPDPKKVQN) form a disordered region. A phosphoserine mark is found at S300, S304, S306, S309, and S325. A phosphothreonine mark is found at T327 and T328.

It belongs to the protein kinase superfamily. STE Ser/Thr protein kinase family. STE20 subfamily. Homodimer. Interacts with PDCD10. Interacts with GOLGA2. Interacts with CTTNBP2NL. Interacts with RIPOR1 (via C-terminus); this interaction occurs in a PDCD10-dependent and Rho-independent manner. Interacts with PDCD10; this interaction is required for the association of STK26 with RIPOR1. Part of the core of STRIPAK complexes composed of PP2A catalytic and scaffolding subunits, the striatins (PP2A regulatory subunits), the striatin-associated proteins MOB4, STRIP1 and STRIP2, PDCD10 and members of the STE20 kinases, such as STK24 and STK26. Mg(2+) serves as cofactor.

It localises to the cytoplasm. The protein resides in the golgi apparatus. It catalyses the reaction L-seryl-[protein] + ATP = O-phospho-L-seryl-[protein] + ADP + H(+). It carries out the reaction L-threonyl-[protein] + ATP = O-phospho-L-threonyl-[protein] + ADP + H(+). With respect to regulation, interaction with Golgi matrix protein GOLGA2 leads to autophosphorylation on Thr-178, possibly as a consequence of stabilization of dimer formation. May also be activated by C-terminal cleavage. Functionally, serine/threonine-protein kinase that acts as a mediator of cell growth. Modulates apoptosis. In association with STK24 negatively regulates Golgi reorientation in polarized cell migration upon RHO activation. Phosphorylates ATG4B at 'Ser-383', thereby increasing autophagic flux. Part of the striatin-interacting phosphatase and kinase (STRIPAK) complexes. STRIPAK complexes have critical roles in protein (de)phosphorylation and are regulators of multiple signaling pathways including Hippo, MAPK, nuclear receptor and cytoskeleton remodeling. Different types of STRIPAK complexes are involved in a variety of biological processes such as cell growth, differentiation, apoptosis, metabolism and immune regulation. This Homo sapiens (Human) protein is Serine/threonine-protein kinase 26.